The following is a 1273-amino-acid chain: Paired amphipathic helix protein Sin3a (1273 aa).

Disordered stretches follow at residues 1-23 (MKRRLDDQESPVYAAQQRRIPGS) and 87-110 (HPTAVQPHGGQVVQSHAHPAPPVA). A Phosphoserine modification is found at Ser10. In terms of domain architecture, PAH 1 spans 119–189 (QRLKVEDALS…MGFNTFLPPG (71 aa)). Positions 119-196 (QRLKVEDALS…PPGYKIEVQT (78 aa)) are interaction with HCFC1. Glycyl lysine isopeptide (Lys-Gly) (interchain with G-Cter in SUMO2) cross-links involve residues Lys122 and Lys134. The tract at residues 205–297 (PGQVHQIPTH…ISLGTAPSLQ (93 aa)) is disordered. Residues 205 to 480 (PGQVHQIPTH…RKALRSAEAY (276 aa)) are interaction with REST. Over residues 228-237 (SQPSAQSAPA) the composition is skewed to low complexity. Over residues 238–248 (PAQPAPQPPPA) the composition is skewed to pro residues. Positions 252–266 (KPSQLQAHTPASQQT) are enriched in polar residues. Over residues 267–282 (PPLPPYASPRSPPVQP) the composition is skewed to pro residues. The residue at position 277 (Ser277) is a Phosphoserine. Residue Thr284 is modified to Phosphothreonine. Residues 284 to 297 (TPVTISLGTAPSLQ) are compositionally biased toward polar residues. The PAH 2 domain maps to 300–383 (QPVEFNHAIN…SEFGQFLPDA (84 aa)). A disordered region spans residues 398–446 (DSVRNDHGGTVKKPQLNNKPQRPSQNGCQIRRHPTGTTPPVKKKPKLLN). A compositionally biased stretch (polar residues) spans 412-425 (QLNNKPQRPSQNGC). A PAH 3 domain is found at 456 to 525 (SKHGGGTESL…NWFKNFLGYK (70 aa)). The interaction with SAP30 stretch occupies residues 458–525 (HGGGTESLFF…NWFKNFLGYK (68 aa)). Lys469 carries the N6-acetyllysine modification. Residues 523–850 (GYKESVHLET…EMDVDEATGA (328 aa)) are interaction with NCOR1. The interaction with SUDS3 and SAP130 stretch occupies residues 524–659 (YKESVHLETY…KFRLDNTLGG (136 aa)). A Glycyl lysine isopeptide (Lys-Gly) (interchain with G-Cter in SUMO2) cross-link involves residue Lys563. Residues 687 to 829 (NPSIAVPIVL…IPDLLFAQRG (143 aa)) form an interaction with HDAC1 and ARID4B region. A phosphoserine mark is found at Ser832 and Ser860. N6-acetyllysine is present on residues Lys865 and Lys875. Residues 888–967 (VNNNWYIFMR…YYPAFLDMVR (80 aa)) form an interaction with OGT region. Residues 903–932 (CLRLLRICSQAERQIEEENREREWEREVLG) adopt a coiled-coil conformation. Phosphoserine is present on residues Ser940, Ser1089, and Ser1112. Positions 1136–1156 (CQRGREQQEKEGKEGNSKKTM) are disordered. Residues 1138-1156 (RGREQQEKEGKEGNSKKTM) show a composition bias toward basic and acidic residues.

Interacts with ARID4B, BRMS1L, HCFC1, HDAC1, HDAC2, MXI1, SAP30L, SAP130, SFPQ and TOPORS. Interacts with OGT (via TPRs 1-6); the interaction mediates transcriptional repression in parallel with histone deacetylase. Interacts with BAZ2A, MXD1, MXD3, MXD4, MBD2, DACH1, NCOR1, NR4A2, REST, RLIM, SAP30, SETDB1, SMYD2, and SUDS3. Interacts with PHF12 in a complex composed of HDAC1, PHF12 and SAP30. Interacts with TET1; the interaction recruits SIN3A to gene promoters. The large PER complex involved in the histone deacetylation is composed of at least HDAC1, PER2, SFPQ and SIN3A. Interacts with KLF11. Interacts with PPHLN1. Found in a complex with YY1, GON4L and HDAC1. Interacts (via PAH2) with FOXK1. Interacts with FOXK2. Found in a complex composed of at least SINHCAF, SIN3A, HDAC1, SAP30, RBBP4, OGT and TET1. Interacts with SINHCAF. Interacts with SPHK2. Post-translationally, SUMO1 sumoylated by TOPORS. Probably desumoylated by SENP2. Expressed in the developing brain, with highest levels of expression detected in the ventricular zone of various cortical regions.

It localises to the nucleus. It is found in the nucleolus. Functionally, acts as a transcriptional repressor. Corepressor for REST. Interacts with MXI1 to repress MYC responsive genes and antagonize MYC oncogenic activities. Also interacts with MXD1-MAX heterodimers to repress transcription by tethering SIN3A to DNA. Acts cooperatively with OGT to repress transcription in parallel with histone deacetylation. Involved in the control of the circadian rhythms. Required for the transcriptional repression of circadian target genes, such as PER1, mediated by the large PER complex through histone deacetylation. Cooperates with FOXK1 to regulate cell cycle progression probably by repressing cell cycle inhibitor genes expression. Required for cortical neuron differentiation and callosal axon elongation. The polypeptide is Paired amphipathic helix protein Sin3a (Homo sapiens (Human)).